The following is a 280-amino-acid chain: Phosphonates import ATP-binding protein PhnC (280 aa).

The 244-residue stretch at 2–245 folds into the ABC transporter domain; it reads FELKNVTRRF…AVKEIYGTDK (244 aa). 34–41 is an ATP binding site; it reads GRSGAGKS. Positions 257–280 are disordered; it reads TSLESKRRAEDVSSGRVAKAAAVH. Positions 260–269 are enriched in basic and acidic residues; it reads ESKRRAEDVS.

Belongs to the ABC transporter superfamily. Phosphonates importer (TC 3.A.1.9.1) family. As to quaternary structure, the complex is composed of two ATP-binding proteins (PhnC), two transmembrane proteins (PhnE) and a solute-binding protein (PhnD).

The protein localises to the cell inner membrane. The catalysed reaction is phosphonate(out) + ATP + H2O = phosphonate(in) + ADP + phosphate + H(+). Functionally, part of the ABC transporter complex PhnCDE involved in phosphonates import. Responsible for energy coupling to the transport system. This is Phosphonates import ATP-binding protein PhnC from Rhizobium johnstonii (strain DSM 114642 / LMG 32736 / 3841) (Rhizobium leguminosarum bv. viciae).